Here is a 386-residue protein sequence, read N- to C-terminus: GTPase Obg (386 aa).

One can recognise an Obg domain in the interval 1–159; the sequence is MKFIDEARIE…RTLKLELKVL (159 aa). In terms of domain architecture, OBG-type G spans 160 to 348; that stretch reads ADVGLLGMPN…LTFAIMSYLD (189 aa). GTP is bound by residues 166–173, 191–195, 213–216, 284–287, and 329–331; these read GMPNAGKS, FTTLH, DIPG, NKVD, and SAL. 2 residues coordinate Mg(2+): Ser-173 and Thr-193.

The protein belongs to the TRAFAC class OBG-HflX-like GTPase superfamily. OBG GTPase family. In terms of assembly, monomer. It depends on Mg(2+) as a cofactor.

The protein localises to the cytoplasm. Its function is as follows. An essential GTPase which binds GTP, GDP and possibly (p)ppGpp with moderate affinity, with high nucleotide exchange rates and a fairly low GTP hydrolysis rate. Plays a role in control of the cell cycle, stress response, ribosome biogenesis and in those bacteria that undergo differentiation, in morphogenesis control. This chain is GTPase Obg, found in Chromobacterium violaceum (strain ATCC 12472 / DSM 30191 / JCM 1249 / CCUG 213 / NBRC 12614 / NCIMB 9131 / NCTC 9757 / MK).